The chain runs to 201 residues: Glycerol-3-phosphate acyltransferase (201 aa).

5 helical membrane passes run 4–24, 55–75, 80–100, 110–130, and 152–174; these read LVAA…LVLT, LATL…VWVL, MVPV…WLGF, IGTL…TWLV, and FALY…MGFY.

This sequence belongs to the PlsY family. In terms of assembly, probably interacts with PlsX.

The protein resides in the cell inner membrane. It catalyses the reaction an acyl phosphate + sn-glycerol 3-phosphate = a 1-acyl-sn-glycero-3-phosphate + phosphate. Its pathway is lipid metabolism; phospholipid metabolism. Functionally, catalyzes the transfer of an acyl group from acyl-phosphate (acyl-PO(4)) to glycerol-3-phosphate (G3P) to form lysophosphatidic acid (LPA). This enzyme utilizes acyl-phosphate as fatty acyl donor, but not acyl-CoA or acyl-ACP. This Paramagnetospirillum magneticum (strain ATCC 700264 / AMB-1) (Magnetospirillum magneticum) protein is Glycerol-3-phosphate acyltransferase.